A 267-amino-acid chain; its full sequence is 4-hydroxy-tetrahydrodipicolinate reductase (267 aa).

NAD(+)-binding positions include 12–17, Asp-38, 100–102, and 126–129; these read GARGRM, GTT, and APNF. The active-site Proton donor/acceptor is the His-156. His-157 contributes to the (S)-2,3,4,5-tetrahydrodipicolinate binding site. The active-site Proton donor is the Lys-160. 166 to 167 is a binding site for (S)-2,3,4,5-tetrahydrodipicolinate; that stretch reads GT.

It belongs to the DapB family.

The protein resides in the cytoplasm. The catalysed reaction is (S)-2,3,4,5-tetrahydrodipicolinate + NAD(+) + H2O = (2S,4S)-4-hydroxy-2,3,4,5-tetrahydrodipicolinate + NADH + H(+). The enzyme catalyses (S)-2,3,4,5-tetrahydrodipicolinate + NADP(+) + H2O = (2S,4S)-4-hydroxy-2,3,4,5-tetrahydrodipicolinate + NADPH + H(+). It functions in the pathway amino-acid biosynthesis; L-lysine biosynthesis via DAP pathway; (S)-tetrahydrodipicolinate from L-aspartate: step 4/4. Catalyzes the conversion of 4-hydroxy-tetrahydrodipicolinate (HTPA) to tetrahydrodipicolinate. This chain is 4-hydroxy-tetrahydrodipicolinate reductase, found in Bacillus pumilus (strain SAFR-032).